We begin with the raw amino-acid sequence, 156 residues long: Small ribosomal subunit protein uS7 (156 aa).

This sequence belongs to the universal ribosomal protein uS7 family. As to quaternary structure, part of the 30S ribosomal subunit. Contacts proteins S9 and S11.

One of the primary rRNA binding proteins, it binds directly to 16S rRNA where it nucleates assembly of the head domain of the 30S subunit. Is located at the subunit interface close to the decoding center, probably blocks exit of the E-site tRNA. The chain is Small ribosomal subunit protein uS7 from Neisseria gonorrhoeae (strain ATCC 700825 / FA 1090).